Reading from the N-terminus, the 465-residue chain is Myosin-6 (465 aa).

One can recognise a Myosin motor domain in the interval Ile-1–Pro-35. A coiled-coil region spans residues Leu-36–Arg-465. 2 positions are modified to phosphoserine: Ser-285 and Ser-334. Tyr-456 bears the Phosphotyrosine mark.

As to quaternary structure, muscle myosin is a hexameric protein that consists of 2 heavy chain subunits (MHC), 2 alkali light chain subunits (MLC) and 2 regulatory light chain subunits (MLC-2).

It is found in the cytoplasm. The protein resides in the myofibril. Muscle contraction. The polypeptide is Myosin-6 (MYH6) (Oryctolagus cuniculus (Rabbit)).